The following is a 438-amino-acid chain: Xylose isomerase (438 aa).

Aspartate 306 and aspartate 308 together coordinate Mg(2+).

This sequence belongs to the xylose isomerase family. Homotetramer. Requires Mg(2+) as cofactor.

It localises to the cytoplasm. The enzyme catalyses alpha-D-xylose = alpha-D-xylulofuranose. This chain is Xylose isomerase, found in Caldicellulosiruptor bescii (strain ATCC BAA-1888 / DSM 6725 / KCTC 15123 / Z-1320) (Anaerocellum thermophilum).